The primary structure comprises 119 residues: Large ribosomal subunit protein uL18 (119 aa).

Belongs to the universal ribosomal protein uL18 family. Part of the 50S ribosomal subunit; part of the 5S rRNA/L5/L18/L25 subcomplex. Contacts the 5S and 23S rRNAs.

This is one of the proteins that bind and probably mediate the attachment of the 5S RNA into the large ribosomal subunit, where it forms part of the central protuberance. This chain is Large ribosomal subunit protein uL18, found in Clostridium botulinum (strain Langeland / NCTC 10281 / Type F).